Here is a 250-residue protein sequence, read N- to C-terminus: 5'-nucleotidase SurE (250 aa).

A divalent metal cation-binding residues include Asp8, Asp9, Ser39, and Asn91.

This sequence belongs to the SurE nucleotidase family. Requires a divalent metal cation as cofactor.

It localises to the cytoplasm. It catalyses the reaction a ribonucleoside 5'-phosphate + H2O = a ribonucleoside + phosphate. Nucleotidase that shows phosphatase activity on nucleoside 5'-monophosphates. The polypeptide is 5'-nucleotidase SurE (Leptospira borgpetersenii serovar Hardjo-bovis (strain JB197)).